The chain runs to 98 residues: DNA-directed RNA polymerase subunit Rpo11 (98 aa).

Belongs to the archaeal Rpo11/eukaryotic RPB11/RPC19 RNA polymerase subunit family. As to quaternary structure, part of the RNA polymerase complex.

The protein localises to the cytoplasm. It carries out the reaction RNA(n) + a ribonucleoside 5'-triphosphate = RNA(n+1) + diphosphate. Its function is as follows. DNA-dependent RNA polymerase (RNAP) catalyzes the transcription of DNA into RNA using the four ribonucleoside triphosphates as substrates. This Korarchaeum cryptofilum (strain OPF8) protein is DNA-directed RNA polymerase subunit Rpo11.